The sequence spans 105 residues: Putative thioredoxin-5 (105 aa).

In terms of domain architecture, Thioredoxin spans Met-1–Leu-104. Active-site nucleophile residues include Cys-30 and Cys-33. Cys-30 and Cys-33 form a disulfide bridge.

The protein belongs to the thioredoxin family.

Functionally, participates in various redox reactions through the reversible oxidation of its active center dithiol to a disulfide and catalyzes dithiol-disulfide exchange reactions. The chain is Putative thioredoxin-5 (trxE) from Dictyostelium discoideum (Social amoeba).